The sequence spans 201 residues: Basic helix-loop-helix transcription factor scleraxis (201 aa).

Disordered regions lie at residues 1-92 (MSFA…NSVN) and 148-177 (AFFHAARAGSPPPPPPPPPARDGENTQPKQ). A compositionally biased stretch (gly residues) spans 59 to 69 (RRAGGGGPGGR). Over residues 70–88 (PGREPRQRHTANARERDRT) the composition is skewed to basic and acidic residues. The bHLH domain maps to 75-127 (RQRHTANARERDRTNSVNTAFTALRTLIPTEPADRKLSKIETLRLASSYISHL). Residues 157-167 (SPPPPPPPPPA) show a composition bias toward pro residues.

Efficient DNA binding requires dimerization with another bHLH protein. Dimerizes and binds the E-box consensus sequence with E12.

It localises to the nucleus. Functionally, plays an early essential role in mesoderm formation, as well as a later role in formation of somite-derived chondrogenic lineages. The protein is Basic helix-loop-helix transcription factor scleraxis (SCX) of Homo sapiens (Human).